The sequence spans 301 residues: tRNA dimethylallyltransferase (301 aa).

12-19 (GPTASGKT) is a binding site for ATP. 14 to 19 (TASGKT) is a binding site for substrate. The interaction with substrate tRNA stretch occupies residues 37 to 40 (DSLS).

Belongs to the IPP transferase family. In terms of assembly, monomer. It depends on Mg(2+) as a cofactor.

The catalysed reaction is adenosine(37) in tRNA + dimethylallyl diphosphate = N(6)-dimethylallyladenosine(37) in tRNA + diphosphate. Functionally, catalyzes the transfer of a dimethylallyl group onto the adenine at position 37 in tRNAs that read codons beginning with uridine, leading to the formation of N6-(dimethylallyl)adenosine (i(6)A). The chain is tRNA dimethylallyltransferase from Sulfurovum sp. (strain NBC37-1).